Reading from the N-terminus, the 372-residue chain is MLKSTQVILIFILLISIVESLSWLALGLAANRFDRDKPGTSCKSLKGLTRRQMRFCKKNIDLMESVRSGSLAAHAECQFQFHKRRWNCTLIDPVTHEVIPDVFLYENTRESAFVHAISSAAVAYKVTRDCARGISERCGCDYSKNDHSGKSQFQYQGCSDNVKFGIGVSKEFVDSAQRRVLMMKDDNGTSLLGPSQLSADGMHMINLHNNQAGRQVLEKSLRRECKCHGMSGSCEMRTCWDSLPNFRHIGMAIKDKFDGAAEVKVVKEDGIEKPRIVMKNSQFKRHTNADLVYMTPSPDFCESDPLRGILGTKGRQCTLAPNAIDDCSLLCCGRGYEKKVQIVEEKCNCKFIYCCEVRCEPCQKRIEKYLCL.

A signal peptide spans 1 to 29 (MLKSTQVILIFILLISIVESLSWLALGLA). 3 disulfides stabilise this stretch: cysteine 77-cysteine 88, cysteine 130-cysteine 138, and cysteine 140-cysteine 158. Asparagine 87 carries N-linked (GlcNAc...) asparagine glycosylation. N-linked (GlcNAc...) asparagine glycosylation is present at asparagine 187. 8 disulfide bridges follow: cysteine 225-cysteine 239, cysteine 227-cysteine 234, cysteine 301-cysteine 332, cysteine 317-cysteine 327, cysteine 331-cysteine 371, cysteine 347-cysteine 362, cysteine 349-cysteine 359, and cysteine 354-cysteine 355. Residue serine 231 is the site of O-palmitoleoyl serine; by mom-1 attachment.

Belongs to the Wnt family. In terms of processing, palmitoleoylation is required for efficient binding to frizzled receptors. Depalmitoleoylation leads to Wnt signaling pathway inhibition. Expressed in intestine, some head neurons and ventral nerve cord and pharyngeal neurons. Expressed in the tail and weakly expressed in the vulva and body wall muscles. Expressed highly in posterior dorsal and ventral muscle cells.

Its subcellular location is the secreted. It is found in the extracellular space. It localises to the extracellular matrix. The protein resides in the cytoplasm. The protein localises to the cell membrane. Its function is as follows. Ligand for members of the frizzled family of seven transmembrane receptors. Probable developmental protein. May be a signaling molecule which affects the development of discrete regions of tissues. Is likely to signal over only few cell diameters. Binds receptor tyrosine kinase cam-1. Together with Wnt ligand cwn-2, regulates the migration of CAN, ALM, BDU and HSN neurons during embryogenesis, the migration of QL and QR neuroblast descendants during larval development, and polarity of ALM neurons. Also acts with the Wnt ligand egl-20 to direct HSN neuron migration. Acts through the Wnt receptor cfz-2 to direct ALM migration. Also plays a role in axon growth and guidance in HSN and male CP neurons. In addition, together with Wnt ligand cwn-2, negatively regulates developmental neurite pruning of AIM neurons probably by acting as a ligand for receptor tyrosine kinase cam-1. Probably by activating the Wnt/Frizzled pathway, may regulate vulva development. May act redundantly with other Wnt ligands such as cwn-2 and mom-2 to control seam cell polarity. The protein is Protein Wnt-1 (cwn-1) of Caenorhabditis elegans.